Reading from the N-terminus, the 342-residue chain is 4-amino-5-hydroxymethyl-2-methylpyrimidine phosphate synthase (342 aa).

K62 is modified (N6-(pyridoxal phosphate)lysine). The active site involves H66. 115–118 (GEFG) provides a ligand contact to pyridoxal 5'-phosphate. Positions 195–199 (CCCFC) match the CCCFC; essential for catalytic activity, may be the site of iron coordination motif.

This sequence belongs to the NMT1/THI5 family. In terms of assembly, homodimer. The cofactor is Fe cation.

It carries out the reaction N(6)-(pyridoxal phosphate)-L-lysyl-[4-amino-5-hydroxymethyl-2-methylpyrimidine phosphate synthase] + L-histidyl-[4-amino-5-hydroxymethyl-2-methylpyrimidine phosphate synthase] + 2 Fe(3+) + 4 H2O = L-lysyl-[4-amino-5-hydroxymethyl-2-methylpyrimidine phosphate synthase] + (2S)-2-amino-5-hydroxy-4-oxopentanoyl-[4-amino-5-hydroxymethyl-2-methylpyrimidine phosphate synthase] + 4-amino-2-methyl-5-(phosphooxymethyl)pyrimidine + 3-oxopropanoate + 2 Fe(2+) + 2 H(+). It participates in cofactor biosynthesis; thiamine diphosphate biosynthesis. Responsible for the formation of the pyrimidine heterocycle in the thiamine biosynthesis pathway. Catalyzes the formation of hydroxymethylpyrimidine phosphate (HMP-P) from histidine and pyridoxal phosphate (PLP). The protein uses PLP and the active site histidine to form HMP-P, generating an inactive enzyme. The enzyme can only undergo a single turnover, which suggests it is a suicide enzyme. This is 4-amino-5-hydroxymethyl-2-methylpyrimidine phosphate synthase from Aspergillus parasiticus.